The sequence spans 404 residues: Imidazolonepropionase (404 aa).

2 residues coordinate Fe(3+): His-73 and His-75. Residues His-73 and His-75 each coordinate Zn(2+). The 4-imidazolone-5-propanoate site is built by Arg-82, Tyr-145, and His-178. An N-formimidoyl-L-glutamate-binding site is contributed by Tyr-145. His-243 is a binding site for Fe(3+). Position 243 (His-243) interacts with Zn(2+). Gln-246 is a 4-imidazolone-5-propanoate binding site. Asp-318 is a binding site for Fe(3+). Asp-318 contacts Zn(2+). Residues Asn-320 and Gly-322 each contribute to the N-formimidoyl-L-glutamate site. Ser-323 contributes to the 4-imidazolone-5-propanoate binding site.

It belongs to the metallo-dependent hydrolases superfamily. HutI family. The cofactor is Zn(2+). Fe(3+) is required as a cofactor.

It is found in the cytoplasm. It carries out the reaction 4-imidazolone-5-propanoate + H2O = N-formimidoyl-L-glutamate. Its pathway is amino-acid degradation; L-histidine degradation into L-glutamate; N-formimidoyl-L-glutamate from L-histidine: step 3/3. Catalyzes the hydrolytic cleavage of the carbon-nitrogen bond in imidazolone-5-propanoate to yield N-formimidoyl-L-glutamate. It is the third step in the universal histidine degradation pathway. The sequence is that of Imidazolonepropionase from Bradyrhizobium diazoefficiens (strain JCM 10833 / BCRC 13528 / IAM 13628 / NBRC 14792 / USDA 110).